The primary structure comprises 570 residues: Small ribosomal subunit protein uS2c (570 aa).

The segment at 1–306 (MLNKKPPYLI…IKLNPLSTPQ (306 aa)) is N-terminal extension. TRAM domains lie at 28–89 (KLIP…KLIK) and 104–169 (ALTP…VATV).

It belongs to the universal ribosomal protein uS2 family.

It is found in the plastid. Its subcellular location is the chloroplast. In Chlamydomonas reinhardtii (Chlamydomonas smithii), this protein is Small ribosomal subunit protein uS2c (rps2-1).